Consider the following 769-residue polypeptide: DNA gyrase subunit B (769 aa).

The Toprim domain maps to 414–528 (SEIYLVEGDS…NGHIYLAQPP (115 aa)). Residues Glu-420, Asp-493, and Asp-495 each coordinate Mg(2+).

The protein belongs to the type II topoisomerase GyrB family. In terms of assembly, heterotetramer, composed of two GyrA and two GyrB chains. In the heterotetramer, GyrA contains the active site tyrosine that forms a transient covalent intermediate with DNA, while GyrB binds cofactors and catalyzes ATP hydrolysis. The cofactor is Mg(2+). Requires Mn(2+) as cofactor. It depends on Ca(2+) as a cofactor.

It is found in the cytoplasm. It carries out the reaction ATP-dependent breakage, passage and rejoining of double-stranded DNA.. In terms of biological role, a type II topoisomerase that negatively supercoils closed circular double-stranded (ds) DNA in an ATP-dependent manner to modulate DNA topology and maintain chromosomes in an underwound state. Negative supercoiling favors strand separation, and DNA replication, transcription, recombination and repair, all of which involve strand separation. Also able to catalyze the interconversion of other topological isomers of dsDNA rings, including catenanes and knotted rings. Type II topoisomerases break and join 2 DNA strands simultaneously in an ATP-dependent manner. The chain is DNA gyrase subunit B from Campylobacter jejuni subsp. jejuni serotype O:2 (strain ATCC 700819 / NCTC 11168).